The chain runs to 753 residues: 5-methyltetrahydropteroyltriglutamate--homocysteine methyltransferase (753 aa).

5-methyltetrahydropteroyltri-L-glutamate is bound by residues 19-22 (RELK) and Arg-113. L-homocysteine contacts are provided by residues 430–432 (IGS) and Glu-483. Residues 430–432 (IGS) and Glu-483 contribute to the L-methionine site. 5-methyltetrahydropteroyltri-L-glutamate is bound by residues 514-515 (RC) and Trp-560. Position 598 (Asp-598) interacts with L-homocysteine. Asp-598 provides a ligand contact to L-methionine. Glu-604 is a binding site for 5-methyltetrahydropteroyltri-L-glutamate. Zn(2+) contacts are provided by His-640, Cys-642, and Glu-664. The active-site Proton donor is the His-693. Cys-725 contributes to the Zn(2+) binding site.

This sequence belongs to the vitamin-B12 independent methionine synthase family. Requires Zn(2+) as cofactor.

The catalysed reaction is 5-methyltetrahydropteroyltri-L-glutamate + L-homocysteine = tetrahydropteroyltri-L-glutamate + L-methionine. The protein operates within amino-acid biosynthesis; L-methionine biosynthesis via de novo pathway; L-methionine from L-homocysteine (MetE route): step 1/1. Its function is as follows. Catalyzes the transfer of a methyl group from 5-methyltetrahydrofolate to homocysteine resulting in methionine formation. In Rhodococcus jostii (strain RHA1), this protein is 5-methyltetrahydropteroyltriglutamate--homocysteine methyltransferase.